Consider the following 576-residue polypeptide: Interleukin-1 receptor type 1 (576 aa).

Positions 1–19 are cleaved as a signal peptide; it reads MENMKVLLGLICLMVPLLS. At 20–338 the chain is on the extracellular side; sequence LEIDVCTEYP…QLIYPVPDFK (319 aa). 3 cysteine pairs are disulfide-bonded: C25–C107, C46–C99, and C145–C199. 3 Ig-like C2-type domains span residues 25–115, 121–213, and 229–329; these read CTEY…VTVT, PGLC…YPVT, and PVIL…AHVQ. N63, N103, N174, N236, N252, N266, and N300 each carry an N-linked (GlcNAc...) asparagine glycan. An intrachain disulfide couples C251 to C315. A helical transmembrane segment spans residues 339 to 359; that stretch reads NYLIGGFIILTATIVCCVCIY. Residues 360-576 lie on the Cytoplasmic side of the membrane; it reads KVFKVDIVLW…LPAATHLPLG (217 aa). A TIR domain is found at 386-541; the sequence is KTYDAYILYP…RFWKNLRYQM (156 aa). The active site involves E473. Phosphotyrosine is present on Y499. Position 556 is a phosphothreonine; by PKC (T556).

It belongs to the interleukin-1 receptor family. As to quaternary structure, the interleukin-1 receptor complex is a heterodimer of IL1R1 and IL1RAP. Interacts with PIK3R1. Interacts with IL1A. A soluble form (sIL1R1) is probably produced by proteolytic cleavage at the cell surface (shedding). Post-translationally, rapidly phosphorylated on Tyr-499 in response to IL-1, which creates a SH2 binding site for the PI 3-kinase regulatory subunit PIK3R1. In terms of tissue distribution, isoform 2 is expressed in various brain tissues.

The protein resides in the membrane. It is found in the cell membrane. Its subcellular location is the secreted. It carries out the reaction NAD(+) + H2O = ADP-D-ribose + nicotinamide + H(+). In terms of biological role, receptor for IL1A, IL1B and IL1RN. After binding to interleukin-1 associates with the coreceptor IL1RAP to form the high affinity interleukin-1 receptor complex which mediates interleukin-1-dependent activation of NF-kappa-B, MAPK and other pathways. Signaling involves the recruitment of adapter molecules such as TOLLIP, MYD88, and IRAK1 or IRAK2 via the respective TIR domains of the receptor/coreceptor subunits. Binds ligands with comparable affinity and binding of antagonist IL1RN prevents association with IL1RAP to form a signaling complex. Involved in IL1B-mediated costimulation of IFNG production from T-helper 1 (Th1) cells. Its function is as follows. Unable to mediate canonical IL-1 signaling. Cooperates with IL1RAP isoform 3 to mediate IL1B-induced neuronal activity including IL1B-potentiated NMDA-induced calcium influx mediated by Akt kinase activation. In Mus musculus (Mouse), this protein is Interleukin-1 receptor type 1 (Il1r1).